Consider the following 441-residue polypeptide: ATP-dependent RNA helicase RhlB (441 aa).

A Q motif motif is present at residues Q9 to A37. Residues L40–V219 enclose the Helicase ATP-binding domain. An ATP-binding site is contributed by A53–T60. The DEAD box signature appears at D165–D168. Residues K243 to L390 enclose the Helicase C-terminal domain. The segment at R401–S441 is disordered.

The protein belongs to the DEAD box helicase family. RhlB subfamily. As to quaternary structure, component of the RNA degradosome, which is a multiprotein complex involved in RNA processing and mRNA degradation.

Its subcellular location is the cytoplasm. The catalysed reaction is ATP + H2O = ADP + phosphate + H(+). In terms of biological role, DEAD-box RNA helicase involved in RNA degradation. Has RNA-dependent ATPase activity and unwinds double-stranded RNA. This chain is ATP-dependent RNA helicase RhlB, found in Shewanella woodyi (strain ATCC 51908 / MS32).